Here is an 880-residue protein sequence, read N- to C-terminus: Probable LRR receptor-like serine/threonine-protein kinase At2g28960 (880 aa).

The first 24 residues, 1 to 24 (MEGRRQRLLVFIFGALAITHLVQA), serve as a signal peptide directing secretion. The Extracellular segment spans residues 25 to 511 (QPPDQRGFIS…NNNNQTYIVP (487 aa)). 8 N-linked (GlcNAc...) asparagine glycosylation sites follow: Asn180, Asn201, Asn228, Asn254, Asn287, Asn403, Asn430, and Asn441. LRR repeat units lie at residues 409-430 (RIIS…AFQN), 433-455 (ELRK…LASM), and 457-476 (SLSI…PKLL). N-linked (GlcNAc...) asparagine glycosylation is present at Asn505. A helical transmembrane segment spans residues 512 to 532 (VVASVASVLIIIAVLILILVF). Residues 533–880 (KKRRPTQVDS…FTTEINPKAR (348 aa)) are Cytoplasmic-facing. Thr564 carries the post-translational modification Phosphothreonine. One can recognise a Protein kinase domain in the interval 573–846 (DNFERVLGEG…QVTNELKQCL (274 aa)). Residues 579 to 587 (LGEGGFGVV) and Lys601 contribute to the ATP site. A Phosphotyrosine modification is found at Tyr646. The active-site Proton acceptor is Asp698. Residue Ser732 is modified to Phosphoserine. 2 positions are modified to phosphothreonine: Thr733 and Thr738. Tyr746 bears the Phosphotyrosine mark. The segment at 854-880 (GVREDMGSRSSVEMSTSFTTEINPKAR) is disordered. The segment covering 861–880 (SRSSVEMSTSFTTEINPKAR) has biased composition (polar residues).

This sequence belongs to the protein kinase superfamily. Ser/Thr protein kinase family.

It is found in the membrane. The enzyme catalyses L-seryl-[protein] + ATP = O-phospho-L-seryl-[protein] + ADP + H(+). It catalyses the reaction L-threonyl-[protein] + ATP = O-phospho-L-threonyl-[protein] + ADP + H(+). This chain is Probable LRR receptor-like serine/threonine-protein kinase At2g28960, found in Arabidopsis thaliana (Mouse-ear cress).